We begin with the raw amino-acid sequence, 651 residues long: Gag-Pro polyprotein (651 aa).

The N-myristoyl glycine; by host moiety is linked to residue Gly-2. Positions 93–142 are disordered; it reads QIPSRPAPPPPSSSTHDPPDSDPQIPPPYVEPTAPQVLPVMHPHGAPPNH. A Phosphoserine; by host MAPK1 modification is found at Ser-105. Residues 118 to 121 carry the PPXY motif motif; sequence PPPY. Residues 124–127 carry the PTAP/PSAP motif motif; it reads PTAP. CCHC-type zinc fingers lie at residues 355–372 and 378–395; these read QPCF…DCTQ and GPCP…DCPR. Positions 476-554 constitute a Peptidase A2 domain; sequence IEALLDTGAD…NNWAIIGRDA (79 aa). Catalysis depends on Asp-481, which acts as the For protease activity; shared with dimeric partner. The interval 631–651 is disordered; the sequence is SQLKKPMEPGDSSTTCGPLTL. Residues 641-651 show a composition bias toward polar residues; that stretch reads DSSTTCGPLTL.

In terms of assembly, homodimer; the homodimers are part of the immature particles. Interacts with human TSG101 and NEDD4; these interactions are essential for budding and release of viral particles. Homodimer; further assembles as homohexamers. Post-translationally, specific enzymatic cleavages by the viral protease yield mature proteins. The polyprotein is cleaved during and after budding, this process is termed maturation. The protease is autoproteolytically processed at its N- and C-termini. Phosphorylation of the matrix protein p19 by MAPK1 seems to play a role in budding. In terms of processing, myristoylated. Myristoylation of the matrix (MA) domain mediates the transport and binding of Gag polyproteins to the host plasma membrane and is required for the assembly of viral particles.

The protein localises to the virion. Its function is as follows. The matrix domain targets Gag, Gag-Pro and Gag-Pro-Pol polyproteins to the plasma membrane via a multipartite membrane binding signal, that includes its myristoylated N-terminus. Matrix protein. In terms of biological role, forms the spherical core of the virus that encapsulates the genomic RNA-nucleocapsid complex. Functionally, binds strongly to viral nucleic acids and promote their aggregation. Also destabilizes the nucleic acids duplexes via highly structured zinc-binding motifs. Its function is as follows. The aspartyl protease mediates proteolytic cleavages of Gag and Gag-Pol polyproteins during or shortly after the release of the virion from the plasma membrane. Cleavages take place as an ordered, step-wise cascade to yield mature proteins. This process is called maturation. Displays maximal activity during the budding process just prior to particle release from the cell (Potential). Cleaves the translation initiation factor eIF4G leading to the inhibition of host cap-dependent translation. In Human T-cell leukemia virus 1 (isolate Caribbea HS-35 subtype A) (HTLV-1), this protein is Gag-Pro polyprotein (gag-pro).